The following is a 545-amino-acid chain: Chaperonin GroEL (545 aa).

Residues 29–32 (TMGP), K50, 86–90 (DGTTT), G414, 477–479 (DAA), and D493 contribute to the ATP site.

Belongs to the chaperonin (HSP60) family. Forms a cylinder of 14 subunits composed of two heptameric rings stacked back-to-back. Interacts with the co-chaperonin GroES.

It localises to the cytoplasm. It catalyses the reaction ATP + H2O + a folded polypeptide = ADP + phosphate + an unfolded polypeptide.. In terms of biological role, together with its co-chaperonin GroES, plays an essential role in assisting protein folding. The GroEL-GroES system forms a nano-cage that allows encapsulation of the non-native substrate proteins and provides a physical environment optimized to promote and accelerate protein folding. This is Chaperonin GroEL from Campylobacter jejuni subsp. jejuni serotype O:2 (strain ATCC 700819 / NCTC 11168).